A 332-amino-acid chain; its full sequence is tRNA-dihydrouridine(20/20a) synthase (332 aa).

FMN is bound by residues 22-24 (PMM) and glutamine 75. The Proton donor role is filled by cysteine 105. FMN contacts are provided by residues lysine 144, histidine 177, 217–219 (NGG), and 239–240 (GR).

It belongs to the Dus family. DusA subfamily. The cofactor is FMN.

It catalyses the reaction 5,6-dihydrouridine(20) in tRNA + NADP(+) = uridine(20) in tRNA + NADPH + H(+). The catalysed reaction is 5,6-dihydrouridine(20) in tRNA + NAD(+) = uridine(20) in tRNA + NADH + H(+). It carries out the reaction 5,6-dihydrouridine(20a) in tRNA + NADP(+) = uridine(20a) in tRNA + NADPH + H(+). The enzyme catalyses 5,6-dihydrouridine(20a) in tRNA + NAD(+) = uridine(20a) in tRNA + NADH + H(+). Functionally, catalyzes the synthesis of 5,6-dihydrouridine (D), a modified base found in the D-loop of most tRNAs, via the reduction of the C5-C6 double bond in target uridines. Specifically modifies U20 and U20a in tRNAs. This is tRNA-dihydrouridine(20/20a) synthase from Xylella fastidiosa (strain Temecula1 / ATCC 700964).